The chain runs to 91 residues: Alpha-defensin-related sequence 12 (91 aa).

An N-terminal signal peptide occupies residues 1-19 (MKKLVLLSAFVLLAFQVQA). Positions 20–65 (DSIQNTDEEIKTEEQPGEENQAVSISFGDPEGYALQDAAIRRARRC) are excised as a propeptide. Tandem repeats lie at residues 65 to 67 (CPP), 68 to 70 (CPS), 71 to 73 (CLS), 74 to 76 (CPW), 77 to 79 (CPR), and 83 to 85 (CPM). The tract at residues 65 to 88 (CPPCPSCLSCPWCPRCLRCPMCKC) is 6 X 3 AA tandem repeats of C-P-X.

Belongs to the alpha-defensin family. In terms of tissue distribution, paneth cells of the small bowel.

The protein resides in the secreted. In terms of biological role, apparent precursor of a secreted, cationic, proline- and cysteine-rich peptide that contains Cys-Pro-Xaa repeats. Unlike cryptdin, the proposed mature peptide region lacks the structural motif characteristic of defensins. It may have microbicidal activities. The sequence is that of Alpha-defensin-related sequence 12 (Defa-rs12) from Mus musculus (Mouse).